The chain runs to 509 residues: Probable cytochrome P450 4ac3 (509 aa).

Cys454 is a binding site for heme.

The protein belongs to the cytochrome P450 family. It depends on heme as a cofactor.

Its subcellular location is the endoplasmic reticulum membrane. The protein resides in the microsome membrane. May be involved in the metabolism of insect hormones and in the breakdown of synthetic insecticides. This chain is Probable cytochrome P450 4ac3 (Cyp4ac3), found in Drosophila melanogaster (Fruit fly).